A 413-amino-acid chain; its full sequence is Methylaspartate ammonia-lyase (413 aa).

Gln172 serves as a coordination point for (2S,3S)-3-methyl-L-aspartate. Residues Asp238, Glu273, and Asp307 each coordinate Mg(2+). Gln329 contributes to the (2S,3S)-3-methyl-L-aspartate binding site. Residue Lys331 is the Proton acceptor of the active site. 360–361 (TC) is a binding site for (2S,3S)-3-methyl-L-aspartate.

It belongs to the methylaspartate ammonia-lyase family. Homodimer. The cofactor is Mg(2+).

The enzyme catalyses (2S,3S)-3-methyl-L-aspartate = mesaconate + NH4(+). Its pathway is amino-acid degradation; L-glutamate degradation via mesaconate pathway; acetate and pyruvate from L-glutamate: step 2/4. Its function is as follows. Involved in the methylaspartate cycle. Catalyzes the formation of the alpha,beta-unsaturated bond by the reversible anti elimination of ammonia from L-threo-beta-methylaspartate (L-threo-(2S,3S)-3-methylaspartate) to give mesaconate. This Citrobacter amalonaticus protein is Methylaspartate ammonia-lyase.